The chain runs to 87 residues: UPF0297 protein Sca_1229 (87 aa).

It belongs to the UPF0297 family.

This chain is UPF0297 protein Sca_1229, found in Staphylococcus carnosus (strain TM300).